The sequence spans 283 residues: Probable endonuclease 4 (283 aa).

The Zn(2+) site is built by His69, His113, Glu148, Asp182, His185, His217, Asp230, His232, and Glu262.

This sequence belongs to the AP endonuclease 2 family. Requires Zn(2+) as cofactor.

The catalysed reaction is Endonucleolytic cleavage to 5'-phosphooligonucleotide end-products.. In terms of biological role, endonuclease IV plays a role in DNA repair. It cleaves phosphodiester bonds at apurinic or apyrimidinic (AP) sites, generating a 3'-hydroxyl group and a 5'-terminal sugar phosphate. The polypeptide is Probable endonuclease 4 (Bifidobacterium longum (strain DJO10A)).